Reading from the N-terminus, the 304-residue chain is Lipid droplet-associated hydrolase (304 aa).

The Nucleophile role is filled by serine 119. Catalysis depends on charge relay system residues aspartate 250 and histidine 279.

The protein belongs to the AB hydrolase superfamily. LDAH family.

The protein resides in the lipid droplet. It catalyses the reaction a cholesterol ester + H2O = cholesterol + a fatty acid + H(+). In terms of biological role, probable serine lipid hydrolase associated with lipid droplets. Has low cholesterol esterase activity. Appears to lack triglyceride lipase activity. Involved in cholesterol and triglyceride homeostasis; stimulates cellular triglyceride accumulation and cellular cholesterol release. This chain is Lipid droplet-associated hydrolase, found in Dictyostelium discoideum (Social amoeba).